Here is a 900-residue protein sequence, read N- to C-terminus: Bifunctional uridylyltransferase/uridylyl-removing enzyme (900 aa).

The tract at residues 1–342 (MPQVDPELFD…PCEQPVQIQP (342 aa)) is uridylyltransferase. Residues 343-705 (LNSRFQLRDG…TTQREFESGS (363 aa)) are uridylyl-removing. Positions 461–583 (VDAHTLNLIK…VGDQTHLDYL (123 aa)) constitute an HD domain. 2 ACT domains span residues 706–789 (QIFI…IIQR) and 816–891 (VLEV…DNGR).

Belongs to the GlnD family. Requires Mg(2+) as cofactor.

The enzyme catalyses [protein-PII]-L-tyrosine + UTP = [protein-PII]-uridylyl-L-tyrosine + diphosphate. The catalysed reaction is [protein-PII]-uridylyl-L-tyrosine + H2O = [protein-PII]-L-tyrosine + UMP + H(+). With respect to regulation, uridylyltransferase (UTase) activity is inhibited by glutamine, while glutamine activates uridylyl-removing (UR) activity. Its function is as follows. Modifies, by uridylylation and deuridylylation, the PII regulatory proteins (GlnB and homologs), in response to the nitrogen status of the cell that GlnD senses through the glutamine level. Under low glutamine levels, catalyzes the conversion of the PII proteins and UTP to PII-UMP and PPi, while under higher glutamine levels, GlnD hydrolyzes PII-UMP to PII and UMP (deuridylylation). Thus, controls uridylylation state and activity of the PII proteins, and plays an important role in the regulation of nitrogen assimilation and metabolism. This Pseudomonas aeruginosa (strain UCBPP-PA14) protein is Bifunctional uridylyltransferase/uridylyl-removing enzyme.